The sequence spans 188 residues: Murein DD-endopeptidase MepS/Murein LD-carboxypeptidase (188 aa).

Positions methionine 1–alanine 26 are cleaved as a signal peptide. The N-palmitoyl cysteine moiety is linked to residue cysteine 27. Cysteine 27 carries the S-diacylglycerol cysteine lipid modification. The NlpC/P60 domain maps to valine 64 to leucine 185. The active-site Nucleophile is the cysteine 94. Catalysis depends on histidine 145, which acts as the Proton acceptor. Histidine 157 is a catalytic residue.

Belongs to the peptidase C40 family. Monomer.

The protein resides in the cell outer membrane. The enzyme catalyses N-acetyl-D-glucosaminyl-N-acetylmuramoyl-L-alanyl-meso-2,6-diaminoheptanedioyl-D-alanine + H2O = N-acetyl-D-glucosaminyl-N-acetylmuramoyl-L-alanyl-meso-2,6-diaminoheptanedioate + D-alanine. Its pathway is cell wall biogenesis; cell wall polysaccharide biosynthesis. Functionally, a murein DD-endopeptidase with specificity for D-Ala-meso-diaminopimelic acid (mDAP) cross-links. Its role is probably to cleave D-Ala-mDAP cross-links to allow insertion of new glycans and thus cell wall expansion. Functionally redundant with MepM and MepH. Also has weak LD-carboxypeptidase activity on L-mDAP-D-Ala peptide bonds. This chain is Murein DD-endopeptidase MepS/Murein LD-carboxypeptidase (mepS), found in Escherichia coli O157:H7.